A 152-amino-acid chain; its full sequence is MHQVIQLKILDSRIGDTIPLPAYATDGSAGLDLRVCISEPMQVAPQQTVLLPTGIAIYIADPKLAAVILPRSGLGHKNGIVLGNLVGLIDSDYQGELKISCWNRSQEHFTVNPGDRIAQLVFIPVVQASFEVVNEFTESSRGEGGFGSSGRY.

Residues arginine 71–glycine 73, asparagine 84, leucine 88–aspartate 90, and lysine 98 contribute to the substrate site.

Belongs to the dUTPase family. The cofactor is Mg(2+).

The catalysed reaction is dUTP + H2O = dUMP + diphosphate + H(+). The protein operates within pyrimidine metabolism; dUMP biosynthesis; dUMP from dCTP (dUTP route): step 2/2. This enzyme is involved in nucleotide metabolism: it produces dUMP, the immediate precursor of thymidine nucleotides and it decreases the intracellular concentration of dUTP so that uracil cannot be incorporated into DNA. The protein is Deoxyuridine 5'-triphosphate nucleotidohydrolase of Legionella pneumophila subsp. pneumophila (strain Philadelphia 1 / ATCC 33152 / DSM 7513).